Consider the following 506-residue polypeptide: Maturase K (506 aa).

This sequence belongs to the intron maturase 2 family. MatK subfamily.

The protein resides in the plastid. The protein localises to the chloroplast. In terms of biological role, usually encoded in the trnK tRNA gene intron. Probably assists in splicing its own and other chloroplast group II introns. The sequence is that of Maturase K from Lathyrus sativus (White vetchling).